Reading from the N-terminus, the 297-residue chain is Transmembrane protein 169 (297 aa).

Positions M1–D85 are disordered. At M1 to H159 the chain is on the extracellular side. Residues K61–D85 are compositionally biased toward acidic residues. A helical transmembrane segment spans residues V160–F180. The Cytoplasmic segment spans residues Y181–L210. Residues V211–V231 traverse the membrane as a helical segment. At V232–V297 the chain is on the extracellular side.

It localises to the membrane. This is Transmembrane protein 169 (TMEM169) from Homo sapiens (Human).